The sequence spans 113 residues: Ig kappa chain V-II region MOPC 511 (113 aa).

The framework-1 stretch occupies residues 1-23 (DIVITQDELSKPVTSGESVSISC). A disulfide bridge links C23 with C93. Positions 24–39 (RSSKSLLYKDGKTYLN) are complementarity-determining-1. The segment at 40 to 54 (WFLQGPQQSPRLLIY) is framework-2. The interval 55-61 (LMSTRAS) is complementarity-determining-2. The tract at residues 62–93 (GVSDRFSGSGSGTDFTLEISRVKAEDVGVYYC) is framework-3. The interval 94–102 (QQLVEYPLT) is complementarity-determining-3. The framework-4 stretch occupies residues 103–112 (FGAGTKLELK).

The chain is Ig kappa chain V-II region MOPC 511 from Mus musculus (Mouse).